A 415-amino-acid polypeptide reads, in one-letter code: Histidine--tRNA ligase (415 aa).

Belongs to the class-II aminoacyl-tRNA synthetase family. As to quaternary structure, homodimer.

The protein resides in the cytoplasm. It catalyses the reaction tRNA(His) + L-histidine + ATP = L-histidyl-tRNA(His) + AMP + diphosphate + H(+). The polypeptide is Histidine--tRNA ligase (Rickettsia felis (strain ATCC VR-1525 / URRWXCal2) (Rickettsia azadi)).